The chain runs to 199 residues: Holliday junction branch migration complex subunit RuvA (199 aa).

A domain I region spans residues 1–62; it reads MIAYIKGLLA…EDGIQFFGFA (62 aa). The segment at 63 to 141 is domain II; the sequence is KEDEKECFLL…GMAAVEHSTL (79 aa). The flexible linker stretch occupies residues 142–152; it reads QQSVITTGSGD. Residues 152 to 199 are domain III; that stretch reads DEAVEALLALGYSQGEARDAVKKAQKSAPEEDLSALIKIALKELAPSR.

The protein belongs to the RuvA family. In terms of assembly, homotetramer. Forms an RuvA(8)-RuvB(12)-Holliday junction (HJ) complex. HJ DNA is sandwiched between 2 RuvA tetramers; dsDNA enters through RuvA and exits via RuvB. An RuvB hexamer assembles on each DNA strand where it exits the tetramer. Each RuvB hexamer is contacted by two RuvA subunits (via domain III) on 2 adjacent RuvB subunits; this complex drives branch migration. In the full resolvosome a probable DNA-RuvA(4)-RuvB(12)-RuvC(2) complex forms which resolves the HJ.

The protein localises to the cytoplasm. Its function is as follows. The RuvA-RuvB-RuvC complex processes Holliday junction (HJ) DNA during genetic recombination and DNA repair, while the RuvA-RuvB complex plays an important role in the rescue of blocked DNA replication forks via replication fork reversal (RFR). RuvA specifically binds to HJ cruciform DNA, conferring on it an open structure. The RuvB hexamer acts as an ATP-dependent pump, pulling dsDNA into and through the RuvAB complex. HJ branch migration allows RuvC to scan DNA until it finds its consensus sequence, where it cleaves and resolves the cruciform DNA. The sequence is that of Holliday junction branch migration complex subunit RuvA from Desulforamulus reducens (strain ATCC BAA-1160 / DSM 100696 / MI-1) (Desulfotomaculum reducens).